The primary structure comprises 187 residues: dTTP/UTP pyrophosphatase (187 aa).

Residue aspartate 72 is the Proton acceptor of the active site.

This sequence belongs to the Maf family. YhdE subfamily. It depends on a divalent metal cation as a cofactor.

It localises to the cytoplasm. The catalysed reaction is dTTP + H2O = dTMP + diphosphate + H(+). It carries out the reaction UTP + H2O = UMP + diphosphate + H(+). Its function is as follows. Nucleoside triphosphate pyrophosphatase that hydrolyzes dTTP and UTP. May have a dual role in cell division arrest and in preventing the incorporation of modified nucleotides into cellular nucleic acids. The sequence is that of dTTP/UTP pyrophosphatase from Vibrio cholerae serotype O1 (strain ATCC 39315 / El Tor Inaba N16961).